A 297-amino-acid chain; its full sequence is T-cell leukemia homeobox protein 1 (297 aa).

The tract at residues 153 to 174 is disordered; it reads DRFTGHPYQNRTPPKKKKPRTS. The segment at residues 168 to 227 is a DNA-binding region (homeobox); the sequence is KKKPRTSFTRLQICELEKRFHRQKYLASAERAALAKALKMTDAQVKTWFQNRRTKWRRQT.

It localises to the nucleus. Functionally, seems to be involved in the development of cranial sensory innervation from peripheral ganglia. This chain is T-cell leukemia homeobox protein 1 (TLX1), found in Gallus gallus (Chicken).